The following is a 60-amino-acid chain: Large ribosomal subunit protein bL32 (60 aa).

Residues methionine 1–lysine 21 form a disordered region. The segment covering histidine 7–tyrosine 20 has biased composition (basic residues).

Belongs to the bacterial ribosomal protein bL32 family.

In Streptococcus equi subsp. zooepidemicus (strain H70), this protein is Large ribosomal subunit protein bL32.